Here is a 108-residue protein sequence, read N- to C-terminus: Putative bolA-like protein K11H12.1 (108 aa).

Residues 89-108 form a disordered region; that stretch reads SKWDGQKQEDSPTCRGGFGK.

It belongs to the BolA/IbaG family.

The chain is Putative bolA-like protein K11H12.1 from Caenorhabditis elegans.